Here is a 315-residue protein sequence, read N- to C-terminus: Ribosome biogenesis protein BRX1 homolog 1 (315 aa).

The interval 1-35 (MGRKRKHSETVTAAPVKDSAPERPQRTLLGWKDKK) is disordered. The segment covering 19-35 (SAPERPQRTLLGWKDKK) has biased composition (basic and acidic residues). One can recognise a Brix domain in the interval 53–256 (EKVLVTCSRR…PIKIFGGSFG (204 aa)).

The protein belongs to the BRX1 family. In terms of tissue distribution, expressed in roots, rosette leaves, stems, flowers, siliques and seeds.

The protein localises to the nucleus. The protein resides in the nucleolus. In terms of biological role, involved in pre-rRNA processing and required for biogenesis of the large (60S) ribosomal subunit. Required for proper development. This is Ribosome biogenesis protein BRX1 homolog 1 from Arabidopsis thaliana (Mouse-ear cress).